Reading from the N-terminus, the 465-residue chain is tRNA modification GTPase MnmE (465 aa).

Positions 25, 87, and 126 each coordinate (6S)-5-formyl-5,6,7,8-tetrahydrofolate. Residues 222–386 (TIRVVLRGLP…LIERLVQFAE (165 aa)) form the TrmE-type G domain. Residues 232-237 (NAGKSR), 251-257 (TDQAGTT), and 276-279 (DTAG) each bind GTP. Residues Ser-236 and Thr-257 each coordinate Mg(2+). Lys-465 provides a ligand contact to (6S)-5-formyl-5,6,7,8-tetrahydrofolate.

The protein belongs to the TRAFAC class TrmE-Era-EngA-EngB-Septin-like GTPase superfamily. TrmE GTPase family. As to quaternary structure, homodimer. Heterotetramer of two MnmE and two MnmG subunits. It depends on K(+) as a cofactor.

The protein resides in the cytoplasm. Its function is as follows. Exhibits a very high intrinsic GTPase hydrolysis rate. Involved in the addition of a carboxymethylaminomethyl (cmnm) group at the wobble position (U34) of certain tRNAs, forming tRNA-cmnm(5)s(2)U34. The protein is tRNA modification GTPase MnmE of Rhodopirellula baltica (strain DSM 10527 / NCIMB 13988 / SH1).